We begin with the raw amino-acid sequence, 268 residues long: Tryptophan synthase alpha chain (268 aa).

Active-site proton acceptor residues include Glu-49 and Asp-60.

Belongs to the TrpA family. As to quaternary structure, tetramer of two alpha and two beta chains.

The enzyme catalyses (1S,2R)-1-C-(indol-3-yl)glycerol 3-phosphate + L-serine = D-glyceraldehyde 3-phosphate + L-tryptophan + H2O. It participates in amino-acid biosynthesis; L-tryptophan biosynthesis; L-tryptophan from chorismate: step 5/5. In terms of biological role, the alpha subunit is responsible for the aldol cleavage of indoleglycerol phosphate to indole and glyceraldehyde 3-phosphate. The chain is Tryptophan synthase alpha chain from Escherichia coli O139:H28 (strain E24377A / ETEC).